The sequence spans 247 residues: Carboxy-S-adenosyl-L-methionine synthase (247 aa).

S-adenosyl-L-methionine-binding positions include Tyr39, 64 to 66, 89 to 90, 117 to 118, Asn132, and Arg199; these read GCS, DN, and DI.

This sequence belongs to the class I-like SAM-binding methyltransferase superfamily. Cx-SAM synthase family. In terms of assembly, homodimer.

The catalysed reaction is prephenate + S-adenosyl-L-methionine = carboxy-S-adenosyl-L-methionine + 3-phenylpyruvate + H2O. Catalyzes the conversion of S-adenosyl-L-methionine (SAM) to carboxy-S-adenosyl-L-methionine (Cx-SAM). This Citrobacter koseri (strain ATCC BAA-895 / CDC 4225-83 / SGSC4696) protein is Carboxy-S-adenosyl-L-methionine synthase.